Here is a 480-residue protein sequence, read N- to C-terminus: Cytochrome b-c1 complex subunit 1, mitochondrial (480 aa).

The N-terminal 34 residues, 1–34 (MAASVVCRAATAGAQVLLRARRSPALLRTPALRS), are a transit peptide targeting the mitochondrion. Lys-111 and Lys-138 each carry N6-acetyllysine. An N6-acetyllysine; alternate modification is found at Lys-163. Lys-163 carries the post-translational modification N6-succinyllysine; alternate. Ser-212 carries the post-translational modification Phosphoserine. Lys-248 is modified (N6-acetyllysine).

Belongs to the peptidase M16 family. UQCRC1/QCR1 subfamily. Component of the ubiquinol-cytochrome c oxidoreductase (cytochrome b-c1 complex, complex III, CIII), a multisubunit enzyme composed of 11 subunits. The complex is composed of 3 respiratory subunits cytochrome b, cytochrome c1 and Rieske protein UQCRFS1, 2 core protein subunits UQCRC1/QCR1 and UQCRC2/QCR2, and 6 low-molecular weight protein subunits UQCRH/QCR6, UQCRB/QCR7, UQCRQ/QCR8, UQCR10/QCR9, UQCR11/QCR10 and subunit 9, the cleavage product of Rieske protein UQCRFS1. The complex exists as an obligatory dimer and forms supercomplexes (SCs) in the inner mitochondrial membrane with NADH-ubiquinone oxidoreductase (complex I, CI) and cytochrome c oxidase (complex IV, CIV), resulting in different assemblies (supercomplex SCI(1)III(2)IV(1) and megacomplex MCI(2)III(2)IV(2)). Interacts with UQCC6. Interacts with STMP1. In terms of tissue distribution, expressed in brain, including substantia nigra, striatum, cortex and cerebellum, and in spinal cord, heart, kidney, liver and muscle.

It is found in the mitochondrion inner membrane. Functionally, component of the ubiquinol-cytochrome c oxidoreductase, a multisubunit transmembrane complex that is part of the mitochondrial electron transport chain which drives oxidative phosphorylation. The respiratory chain contains 3 multisubunit complexes succinate dehydrogenase (complex II, CII), ubiquinol-cytochrome c oxidoreductase (cytochrome b-c1 complex, complex III, CIII) and cytochrome c oxidase (complex IV, CIV), that cooperate to transfer electrons derived from NADH and succinate to molecular oxygen, creating an electrochemical gradient over the inner membrane that drives transmembrane transport and the ATP synthase. The cytochrome b-c1 complex catalyzes electron transfer from ubiquinol to cytochrome c, linking this redox reaction to translocation of protons across the mitochondrial inner membrane, with protons being carried across the membrane as hydrogens on the quinol. In the process called Q cycle, 2 protons are consumed from the matrix, 4 protons are released into the intermembrane space and 2 electrons are passed to cytochrome c. The 2 core subunits UQCRC1/QCR1 and UQCRC2/QCR2 are homologous to the 2 mitochondrial-processing peptidase (MPP) subunits beta-MPP and alpha-MPP respectively, and they seem to have preserved their MPP processing properties. May be involved in the in situ processing of UQCRFS1 into the mature Rieske protein and its mitochondrial targeting sequence (MTS)/subunit 9 when incorporated into complex III. Seems to play an important role in the maintenance of proper mitochondrial function in nigral dopaminergic neurons. The polypeptide is Cytochrome b-c1 complex subunit 1, mitochondrial (UQCRC1) (Homo sapiens (Human)).